Consider the following 940-residue polypeptide: Phosphoenolpyruvate carboxylase (940 aa).

Active-site residues include histidine 138 and lysine 603.

It belongs to the PEPCase type 1 family. Requires Mg(2+) as cofactor.

The enzyme catalyses oxaloacetate + phosphate = phosphoenolpyruvate + hydrogencarbonate. Functionally, forms oxaloacetate, a four-carbon dicarboxylic acid source for the tricarboxylic acid cycle. In Streptococcus thermophilus (strain CNRZ 1066), this protein is Phosphoenolpyruvate carboxylase.